The sequence spans 339 residues: Undecaprenyl-phosphate 4-deoxy-4-formamido-L-arabinose transferase (339 aa).

A run of 2 helical transmembrane segments spans residues 235–255 and 269–289; these read LSLVGGGMALAGFLFALFLLV and LFVLFAVLFMFSGVQLLGMGL.

It belongs to the glycosyltransferase 2 family.

It localises to the cell inner membrane. It carries out the reaction UDP-4-deoxy-4-formamido-beta-L-arabinose + di-trans,octa-cis-undecaprenyl phosphate = 4-deoxy-4-formamido-alpha-L-arabinopyranosyl di-trans,octa-cis-undecaprenyl phosphate + UDP. It functions in the pathway glycolipid biosynthesis; 4-amino-4-deoxy-alpha-L-arabinose undecaprenyl phosphate biosynthesis; 4-amino-4-deoxy-alpha-L-arabinose undecaprenyl phosphate from UDP-4-deoxy-4-formamido-beta-L-arabinose and undecaprenyl phosphate: step 1/2. The protein operates within bacterial outer membrane biogenesis; lipopolysaccharide biosynthesis. Catalyzes the transfer of 4-deoxy-4-formamido-L-arabinose from UDP to undecaprenyl phosphate. The modified arabinose is attached to lipid A and is required for resistance to polymyxin and cationic antimicrobial peptides. The sequence is that of Undecaprenyl-phosphate 4-deoxy-4-formamido-L-arabinose transferase from Pseudomonas aeruginosa (strain LESB58).